Reading from the N-terminus, the 219-residue chain is 23.6 kDa heat shock protein, mitochondrial (219 aa).

The N-terminal 29 residues, 1 to 29 (MALARQCLSKRLAAGCALARPLHAASPVA), are a transit peptide targeting the mitochondrion. The sHSP domain occupies 104–219 (QVAETLTRPL…KRSVTEVKVR (116 aa)).

This sequence belongs to the small heat shock protein (HSP20) family. As to quaternary structure, may form oligomeric structures.

The protein localises to the mitochondrion. This chain is 23.6 kDa heat shock protein, mitochondrial (HSP23.6), found in Oryza sativa subsp. japonica (Rice).